Consider the following 347-residue polypeptide: Cell division protein FtsQ (347 aa).

The disordered stretch occupies residues 1–55 (MARNGNPQFPDERSTATRAKATEPEELDDRFSDLEPEEDSPFLRSQKRVPVRRGP). Topologically, residues 1-66 (MARNGNPQFP…PSKKAANRVK (66 aa)) are cytoplasmic. Basic and acidic residues predominate over residues 10–33 (PDERSTATRAKATEPEELDDRFSD). A helical membrane pass occupies residues 67–87 (IALIVLGVLVVIGGVWMALSA). Topologically, residues 88–347 (YGEHSWRFRL…PTAHTSGRRH (260 aa)) are periplasmic. Residues 98–166 (ESSDSIEVGG…DRIRVQVTER (69 aa)) form the POTRA domain. The disordered stretch occupies residues 308 to 347 (DSHPSAAKPTAPAVAPAVEKPAVAKPAVAKPTAHTSGRRH). Low complexity predominate over residues 313 to 340 (AAKPTAPAVAPAVEKPAVAKPAVAKPTA).

Belongs to the FtsQ/DivIB family. FtsQ subfamily.

It localises to the cell inner membrane. Functionally, essential cell division protein. The protein is Cell division protein FtsQ of Koribacter versatilis (strain Ellin345).